The chain runs to 570 residues: Zinc finger protein 76 (570 aa).

Lys24 is covalently cross-linked (Glycyl lysine isopeptide (Lys-Gly) (interchain with G-Cter in SUMO2)). A run of 3 repeats spans residues 34–45 (IQLEDGTTAYIH), 62–73 (VQLEDGSMAYIH), and 88–99 (VQLEDGSTAYIH). The interval 34-99 (IQLEDGTTAY…LEDGSTAYIH (66 aa)) is 3 X 12 AA approximate repeats. 7 consecutive C2H2-type zinc fingers follow at residues 165–189 (FRCG…ERAH), 195–219 (YRCD…VRTH), 225–249 (YKCP…VRTH), 255–279 (FQCP…VRTH), 285–309 (YTCP…VRIH), 315–339 (YVCT…HVVH), and 345–368 (YTCS…RSAH). Residues 365 to 401 (RSAHGELEATEESEQALYEQQQLEAASAAEESPPPKR) are disordered. Low complexity predominate over residues 379–395 (QALYEQQQLEAASAAEE).

Belongs to the krueppel C2H2-type zinc-finger protein family. As to expression, testis.

Its subcellular location is the nucleus. May be involved in transcriptional regulation. This chain is Zinc finger protein 76 (ZNF76), found in Homo sapiens (Human).